Here is a 419-residue protein sequence, read N- to C-terminus: Imidazolonepropionase (419 aa).

Fe(3+)-binding residues include H82 and H84. Residues H82 and H84 each contribute to the Zn(2+) site. 3 residues coordinate 4-imidazolone-5-propanoate: R91, Y154, and H187. Y154 is an N-formimidoyl-L-glutamate binding site. Residue H252 coordinates Fe(3+). Position 252 (H252) interacts with Zn(2+). E255 is a 4-imidazolone-5-propanoate binding site. Residue D326 coordinates Fe(3+). Position 326 (D326) interacts with Zn(2+). Residues N328 and G330 each contribute to the N-formimidoyl-L-glutamate site. S331 contacts 4-imidazolone-5-propanoate.

Belongs to the metallo-dependent hydrolases superfamily. HutI family. Zn(2+) serves as cofactor. It depends on Fe(3+) as a cofactor.

It localises to the cytoplasm. The catalysed reaction is 4-imidazolone-5-propanoate + H2O = N-formimidoyl-L-glutamate. It participates in amino-acid degradation; L-histidine degradation into L-glutamate; N-formimidoyl-L-glutamate from L-histidine: step 3/3. Its function is as follows. Catalyzes the hydrolytic cleavage of the carbon-nitrogen bond in imidazolone-5-propanoate to yield N-formimidoyl-L-glutamate. It is the third step in the universal histidine degradation pathway. The chain is Imidazolonepropionase from Clostridium tetani (strain Massachusetts / E88).